We begin with the raw amino-acid sequence, 261 residues long: Putative outer membrane protein TC_0650 (261 aa).

Residues 1–17 form the signal peptide; that stretch reads MRFLFAFILLCSPWVSE.

The protein resides in the cell outer membrane. The protein is Putative outer membrane protein TC_0650 of Chlamydia muridarum (strain MoPn / Nigg).